We begin with the raw amino-acid sequence, 194 residues long: Cell division protein SepF (194 aa).

2 disordered regions span residues 35–54 (DHRSDHASGGALATPSDSSP) and 159–194 (SAPSMVSQDHDSVPSSSQQTGAAPVPAWEATSAGGL).

The protein belongs to the SepF family. As to quaternary structure, homodimer. Interacts with FtsZ.

The protein localises to the cytoplasm. Cell division protein that is part of the divisome complex and is recruited early to the Z-ring. Probably stimulates Z-ring formation, perhaps through the cross-linking of FtsZ protofilaments. Its function overlaps with FtsA. The sequence is that of Cell division protein SepF from Prochlorococcus marinus (strain MIT 9313).